Reading from the N-terminus, the 612-residue chain is Chloride intracellular channel protein 6 (612 aa).

The interval 1–373 (MAEATEPKEV…NGPASEEGDL (373 aa)) is disordered. Over residues 34-51 (LEGREASEGAAEAPRDLG) the composition is skewed to basic and acidic residues. Phosphoserine is present on S40. Over residues 84-96 (PGTETPGTSGAPG) the composition is skewed to low complexity. Residues 120-129 (QQVQGTSSGL) show a composition bias toward polar residues. Positions 140–153 (EDARREPEDPKASE) are enriched in basic and acidic residues. The segment covering 208–223 (SSPQPQDEAIEIAAAE) has biased composition (low complexity). Composition is skewed to basic and acidic residues over residues 240-264 (AKGEGETLRKDGFEEAAPEEARVDS) and 275-303 (EEARVDSGENRDQGRLQEETGEEEARPES). Phosphoserine is present on residues S264, S303, and S321. 2 stretches are compositionally biased toward basic and acidic residues: residues 325–335 (EEAKSTGHEES) and 354–364 (ELGRVNGRREN). At S368 the chain carries Phosphoserine. The short motif at 395–398 (CPFS) is the G-site element. The helical transmembrane segment at 397–417 (FSQRLFMILWLKGVIFNVTTV) threads the bilayer. The GST C-terminal domain occupies 441 to 612 (DGEVKTDVNK…AYSDAAKRMK (172 aa)).

Belongs to the chloride channel CLIC family. Monomer (soluble state). Interacts with dopamine receptors DRD2, DRD3 and DRD4. In terms of processing, phosphorylated. As to expression, predominantly expressed in brain, pituitary and stomach. In adult brain, it is restricted to the choroid plexus, the striatal proliferative subventricular zone and the cerebellum where it colocalizes with the D(3)R in the Purkinje cells of the lobules IX and X.

Its subcellular location is the cytoplasm. It localises to the cell membrane. The catalysed reaction is chloride(in) = chloride(out). With respect to regulation, channel activity is redox- and pH-regulated. Inhibited by IAA-94. In the soluble state, catalyzes glutaredoxin-like thiol disulfide exchange reactions with reduced glutathione as electron donor. Can insert into membranes and form voltage-dependent chloride-selective channels. The channel opens upon membrane depolarization at positive voltages and closes at negative membrane voltages. May play a critical role in water-secreting cells, possibly through the regulation of chloride ion transport. This is Chloride intracellular channel protein 6 (Clic6) from Rattus norvegicus (Rat).